The chain runs to 1439 residues: Receptor-type tyrosine-protein phosphatase kappa (1439 aa).

The signal sequence occupies residues 1-26 (MDTTAAAALPAFVALLLLSPWPLLGS). At 27-752 (AQGQFSAGGC…PAKQTDRVVK (726 aa)) the chain is on the extracellular side. Positions 31-194 (FSAGGCTFDD…IQVLSYPCDK (164 aa)) constitute an MAM domain. 3 N-linked (GlcNAc...) asparagine glycosylation sites follow: asparagine 101, asparagine 140, and asparagine 211. Positions 196–281 (PHFLRLGDVE…TQSERGSGVS (86 aa)) constitute an Ig-like C2-type domain. Cysteine 216 and cysteine 270 are disulfide-bonded. Fibronectin type-III domains lie at 294 to 389 (PIAP…CAEP), 392 to 488 (TPKT…TDED), 491 to 595 (GPVP…SAPT), and 597 to 680 (PDYE…GNLP). 9 N-linked (GlcNAc...) asparagine glycosylation sites follow: asparagine 416, asparagine 424, asparagine 436, asparagine 462, asparagine 552, asparagine 586, asparagine 590, asparagine 607, and asparagine 690. The chain crosses the membrane as a helical span at residues 753–774 (IAGISAGILVFILLLLVVILIV). Residues 775–1439 (KKSKLAKKRK…DVALEYLESS (665 aa)) are Cytoplasmic-facing. Serine 856 is subject to Phosphoserine. Tyrosine-protein phosphatase domains follow at residues 887 to 1141 (FKEE…ILEA) and 1173 to 1435 (LKDE…ALEY). Residues aspartate 1050, 1082–1088 (CSAGAGR), and glutamine 1126 contribute to the substrate site. Cysteine 1082 functions as the Phosphocysteine intermediate in the catalytic mechanism. Cysteine 1376 functions as the Phosphocysteine intermediate in the catalytic mechanism.

The protein belongs to the protein-tyrosine phosphatase family. Receptor class 2B subfamily. This protein undergoes proteolytic processing. In terms of tissue distribution, high levels in lung, brain and colon; less in liver, pancreas, stomach, kidney, placenta and mammary carcinoma.

The protein resides in the cell junction. It localises to the adherens junction. Its subcellular location is the cell membrane. It catalyses the reaction O-phospho-L-tyrosyl-[protein] + H2O = L-tyrosyl-[protein] + phosphate. In terms of biological role, regulation of processes involving cell contact and adhesion such as growth control, tumor invasion, and metastasis. Negative regulator of EGFR signaling pathway. Forms complexes with beta-catenin and gamma-catenin/plakoglobin. Beta-catenin may be a substrate for the catalytic activity of PTPRK/PTP-kappa. This is Receptor-type tyrosine-protein phosphatase kappa (PTPRK) from Homo sapiens (Human).